The primary structure comprises 317 residues: tRNA pseudouridine synthase B (317 aa).

The active-site Nucleophile is D47.

Belongs to the pseudouridine synthase TruB family. Type 1 subfamily.

It catalyses the reaction uridine(55) in tRNA = pseudouridine(55) in tRNA. In terms of biological role, responsible for synthesis of pseudouridine from uracil-55 in the psi GC loop of transfer RNAs. The protein is tRNA pseudouridine synthase B of Vibrio atlanticus (strain LGP32) (Vibrio splendidus (strain Mel32)).